We begin with the raw amino-acid sequence, 397 residues long: Elongation factor Tu-2 (397 aa).

The region spanning K10–V206 is the tr-type G domain. A G1 region spans residues G19–T26. G19–T26 serves as a coordination point for GTP. A Mg(2+)-binding site is contributed by T26. Residues G62–S66 form a G2 region. The segment at D83–G86 is G3. Residues D83–H87 and N138–D141 contribute to the GTP site. Residues N138 to D141 form a G4 region. The interval S176 to L178 is G5.

The protein belongs to the TRAFAC class translation factor GTPase superfamily. Classic translation factor GTPase family. EF-Tu/EF-1A subfamily. Monomer.

It localises to the cytoplasm. It carries out the reaction GTP + H2O = GDP + phosphate + H(+). Functionally, GTP hydrolase that promotes the GTP-dependent binding of aminoacyl-tRNA to the A-site of ribosomes during protein biosynthesis. The protein is Elongation factor Tu-2 of Streptomyces ramocissimus.